Here is a 427-residue protein sequence, read N- to C-terminus: Serine hydroxymethyltransferase (427 aa).

(6S)-5,6,7,8-tetrahydrofolate-binding positions include leucine 118 and 122-124; that span reads GHL. Lysine 227 bears the N6-(pyridoxal phosphate)lysine mark. Residues glutamate 243 and 351-353 contribute to the (6S)-5,6,7,8-tetrahydrofolate site; that span reads SPF.

Belongs to the SHMT family. In terms of assembly, homodimer. Pyridoxal 5'-phosphate is required as a cofactor.

Its subcellular location is the cytoplasm. It catalyses the reaction (6R)-5,10-methylene-5,6,7,8-tetrahydrofolate + glycine + H2O = (6S)-5,6,7,8-tetrahydrofolate + L-serine. It participates in one-carbon metabolism; tetrahydrofolate interconversion. It functions in the pathway amino-acid biosynthesis; glycine biosynthesis; glycine from L-serine: step 1/1. Its function is as follows. Catalyzes the reversible interconversion of serine and glycine with tetrahydrofolate (THF) serving as the one-carbon carrier. This reaction serves as the major source of one-carbon groups required for the biosynthesis of purines, thymidylate, methionine, and other important biomolecules. Also exhibits THF-independent aldolase activity toward beta-hydroxyamino acids, producing glycine and aldehydes, via a retro-aldol mechanism. This is Serine hydroxymethyltransferase from Thermotoga maritima (strain ATCC 43589 / DSM 3109 / JCM 10099 / NBRC 100826 / MSB8).